A 161-amino-acid chain; its full sequence is SsrA-binding protein (161 aa).

Positions Met-1 to Ser-23 are disordered.

This sequence belongs to the SmpB family.

Its subcellular location is the cytoplasm. Required for rescue of stalled ribosomes mediated by trans-translation. Binds to transfer-messenger RNA (tmRNA), required for stable association of tmRNA with ribosomes. tmRNA and SmpB together mimic tRNA shape, replacing the anticodon stem-loop with SmpB. tmRNA is encoded by the ssrA gene; the 2 termini fold to resemble tRNA(Ala) and it encodes a 'tag peptide', a short internal open reading frame. During trans-translation Ala-aminoacylated tmRNA acts like a tRNA, entering the A-site of stalled ribosomes, displacing the stalled mRNA. The ribosome then switches to translate the ORF on the tmRNA; the nascent peptide is terminated with the 'tag peptide' encoded by the tmRNA and targeted for degradation. The ribosome is freed to recommence translation, which seems to be the essential function of trans-translation. In Hyphomonas neptunium (strain ATCC 15444), this protein is SsrA-binding protein.